The following is a 712-amino-acid chain: Amine oxidase [copper-containing] gamma 1 (712 aa).

The signal sequence occupies residues 1–24 (MAEPSFARLFLLFFSFLLIFATYS). N-linked (GlcNAc...) asparagine glycans are attached at residues asparagine 146 and asparagine 173. A disulfide bridge connects residues cysteine 188 and cysteine 210. Position 352–363 (352–363 (YMDAGELGLGPT)) interacts with substrate. The active-site Proton acceptor is aspartate 354. Cysteine 373 and cysteine 399 are oxidised to a cystine. 439–444 (VGNYDY) is a substrate binding site. The active-site Schiff-base intermediate with substrate; via topaquinone is tyrosine 442. At tyrosine 442 the chain carries 2',4',5'-topaquinone. The Cu cation site is built by histidine 499 and histidine 501. Residues aspartate 508, methionine 509, and aspartate 510 each contribute to the Mn(2+) site. Asparagine 516 and asparagine 617 each carry an N-linked (GlcNAc...) asparagine glycan. 2 residues coordinate Mn(2+): aspartate 651 and isoleucine 652. Histidine 662 provides a ligand contact to Cu cation.

This sequence belongs to the copper/topaquinone oxidase family. As to quaternary structure, homodimer. It depends on Cu cation as a cofactor. Zn(2+) is required as a cofactor. The cofactor is L-topaquinone. Requires Mn(2+) as cofactor. Post-translationally, topaquinone (TPQ) is generated by copper-dependent autoxidation of a specific tyrosyl residue. As to expression, mostly expressed in roots, stems and flowers, and, at lower levels, in leaves and cotyledons.

Its subcellular location is the secreted. The protein resides in the extracellular space. It is found in the apoplast. It carries out the reaction a primary methyl amine + O2 + H2O = an aldehyde + H2O2 + NH4(+). The protein operates within amine and polyamine degradation; putrescine degradation. Copper amine oxidase that can use putrescine and spermidine as substrates. Required for abscisic acid- (ABA) and polyamine- (PA) and H(2)O(2)-dependent induced nitric oxide (NO) biosynthesis. Involved in ABA signal transduction and in responses to osmotic stress. This Arabidopsis thaliana (Mouse-ear cress) protein is Amine oxidase [copper-containing] gamma 1.